Here is an 883-residue protein sequence, read N- to C-terminus: Phosphoenolpyruvate carboxylase (883 aa).

Active-site residues include His-138 and Lys-546.

The protein belongs to the PEPCase type 1 family. The cofactor is Mg(2+).

The enzyme catalyses oxaloacetate + phosphate = phosphoenolpyruvate + hydrogencarbonate. Forms oxaloacetate, a four-carbon dicarboxylic acid source for the tricarboxylic acid cycle. The chain is Phosphoenolpyruvate carboxylase from Salmonella paratyphi A (strain ATCC 9150 / SARB42).